A 617-amino-acid chain; its full sequence is Diacylglycerol O-acyltransferase 1 (617 aa).

Disordered regions lie at residues 1–52 (MEPI…ETER) and 95–186 (RNTN…PKQE). Positions 7–17 (SNGNKNNSMDK) are enriched in polar residues. Composition is skewed to low complexity over residues 18–34 (QPQQPQQPQQQQQQQQQ) and 96–105 (NTNNNNQNNT). Residues 106–140 (SPTFSSANGKQSNLTQRKINTQIQSKQPTNNNVQP) are compositionally biased toward polar residues. The span at 160-177 (QNNNGNNNNNNNNNNNNN) shows a compositional bias: low complexity. 5 helical membrane passes run 217–237 (LLLILLITASFRLVILNHLLY), 254–274 (WPGVMISLMINLFIIAAYLIE), 306–326 (IIAFSPNPASGIIVMILICTF), 399–419 (IVEALSLSLLILWMVNQYMLP), and 449–469 (YVWLLGFYVFFHLYLNIVAEI). The FYXDWWN motif signature appears at 477 to 483 (FYRDWWN). The next 3 membrane-spanning stretches (helical) occupy residues 520 to 540 (GYFMCFFVSAIFHELVISIPF), 545 to 565 (LWGFFGIMSQMVLIALTKNLM), and 570 to 590 (LGNVIFWISIVLGQPLVVLLY). Residue His532 is part of the active site.

It belongs to the membrane-bound acyltransferase family. Sterol o-acyltransferase subfamily.

The protein resides in the endoplasmic reticulum membrane. The enzyme catalyses an acyl-CoA + a 1,2-diacyl-sn-glycerol = a triacyl-sn-glycerol + CoA. The catalysed reaction is all-trans-retinol + an acyl-CoA = an all-trans-retinyl ester + CoA. It catalyses the reaction 2-(9Z-octadecenoyl)-glycerol + (9Z)-octadecenoyl-CoA = 1,2-di-(9Z-octadecenoyl)-sn-glycerol + CoA. It carries out the reaction 1,2-di-(9Z-octadecenoyl)-sn-glycerol + (9Z)-octadecenoyl-CoA = 1,2,3-tri-(9Z-octadecenoyl)-glycerol + CoA. The enzyme catalyses all-trans-retinol + hexadecanoyl-CoA = all-trans-retinyl hexadecanoate + CoA. The catalysed reaction is 1-O-(9Z-octadecenyl)-glycerol + (9Z)-octadecenoyl-CoA = 1-O-(9Z-octadecyl)-3-(9Z-octadecenoyl)-glycerol + CoA. It catalyses the reaction 1-O-(9Z-octadecyl)-3-(9Z-octadecenoyl)-glycerol + (9Z)-octadecenoyl-CoA = 1-O-(9Z-octadecenyl)-2,3-di-(9Z-octadecenoyl)glycerol + CoA. It carries out the reaction 1-(9Z-octadecenoyl)-glycerol + (9Z)-octadecenoyl-CoA = 1,2-di-(9Z-octadecenoyl)-glycerol + CoA. The enzyme catalyses 1,2-di-(9Z-octadecenoyl)-glycerol + (9Z)-octadecenoate + H(+) = 1,2,3-tri-(9Z-octadecenoyl)-glycerol + H2O. The catalysed reaction is 1-octadecanoyl-2-(5Z,8Z,11Z,14Z-eicosatetraenoyl)-sn-glycerol + (9Z)-octadecenoyl-CoA = 1-octadecanoyl-2-(5Z,8Z,11Z,14Z)-eicosatetraenoyl-3-(9Z)-octadecenoyl-sn-glycerol + CoA. It catalyses the reaction hexadecane-1,2-diol + 2 hexadecanoyl-CoA = 1,2-O,O-dihexadecanoyl-1,2-hexadecanediol + 2 CoA. It carries out the reaction hexadecane-1,2-diol + hexadecanoyl-CoA = 2-hydroxyhexadecyl hexadecanoate + CoA. The enzyme catalyses 2-(9Z-octadecenoyl)-glycerol + hexadecanoyl-CoA = 1-hexadecanoyl-2-(9Z-octadecenoyl)-sn-glycerol + CoA. The catalysed reaction is 1,2-di-(9Z-octadecenoyl)-sn-glycerol + hexadecanoyl-CoA = 1,2-di-(9Z)-octadecenoyl-3-hexadecanoyl-sn-glycerol + CoA. It catalyses the reaction hexadecan-1-ol + hexadecanoyl-CoA = hexadecanyl hexadecanoate + CoA. It carries out the reaction 13-cis-retinol + hexadecanoyl-CoA = 13-cis-retinyl hexadecanoate + CoA. The enzyme catalyses 1,3-di-(9Z-octadecenoyl)-glycerol + (9Z)-octadecenoyl-CoA = 1,2,3-tri-(9Z-octadecenoyl)-glycerol + CoA. The catalysed reaction is 2,3-di-(9Z)-octadecenoyl-sn-glycerol + (9Z)-octadecenoyl-CoA = 1,2,3-tri-(9Z-octadecenoyl)-glycerol + CoA. It participates in lipid metabolism; glycerolipid metabolism. In terms of biological role, catalyzes the terminal and only committed step in triacylglycerol synthesis by using diacylglycerol and fatty acyl CoA as substrates. The sequence is that of Diacylglycerol O-acyltransferase 1 (dgat1) from Dictyostelium discoideum (Social amoeba).